The primary structure comprises 349 residues: D-alanine--D-alanine ligase (349 aa).

The 204-residue stretch at lysine 132–aspartate 335 folds into the ATP-grasp domain. Valine 162–glutamate 217 serves as a coordination point for ATP. Positions 289, 302, and 304 each coordinate Mg(2+).

The protein belongs to the D-alanine--D-alanine ligase family. The cofactor is Mg(2+). Requires Mn(2+) as cofactor.

It localises to the cytoplasm. The catalysed reaction is 2 D-alanine + ATP = D-alanyl-D-alanine + ADP + phosphate + H(+). It functions in the pathway cell wall biogenesis; peptidoglycan biosynthesis. Functionally, cell wall formation. The polypeptide is D-alanine--D-alanine ligase (Lactococcus lactis subsp. lactis (strain IL1403) (Streptococcus lactis)).